A 265-amino-acid chain; its full sequence is Glutamate racemase (265 aa).

Substrate-binding positions include 9-10 (DS) and 41-42 (YS). The active-site Proton donor/acceptor is C73. 74–75 (NT) contributes to the substrate binding site. The active-site Proton donor/acceptor is C184. 185–186 (TH) contacts substrate.

This sequence belongs to the aspartate/glutamate racemases family.

The catalysed reaction is L-glutamate = D-glutamate. It functions in the pathway cell wall biogenesis; peptidoglycan biosynthesis. Functionally, provides the (R)-glutamate required for cell wall biosynthesis. The polypeptide is Glutamate racemase (Actinobacillus pleuropneumoniae serotype 5b (strain L20)).